The primary structure comprises 256 residues: Putative adhesin P1-like protein MPN_132 (256 aa).

Low complexity predominate over residues 56-72; sequence AVSESQAATSSTTTTAT. Disordered regions lie at residues 56-115 and 149-235; these read AVSE…PYLH and FGTD…EVVG. The segment covering 96–112 has biased composition (polar residues); the sequence is KASTQGSGQTNSQNTSP. Low complexity-rich tracts occupy residues 155–179 and 211–222; these read TQPQ…LGSV and STSDGNTSSTNN.

This sequence belongs to the adhesin P1 family.

The chain is Putative adhesin P1-like protein MPN_132 from Mycoplasma pneumoniae (strain ATCC 29342 / M129 / Subtype 1) (Mycoplasmoides pneumoniae).